The sequence spans 137 residues: Large ribosomal subunit protein uL16 (137 aa).

This sequence belongs to the universal ribosomal protein uL16 family. In terms of assembly, part of the 50S ribosomal subunit.

Binds 23S rRNA and is also seen to make contacts with the A and possibly P site tRNAs. In Rhodopseudomonas palustris (strain BisB5), this protein is Large ribosomal subunit protein uL16.